The following is a 273-amino-acid chain: 4-hydroxy-tetrahydrodipicolinate reductase (273 aa).

Residues 12–17 (GAGGRM) and E38 each bind NAD(+). NADP(+) is bound at residue R39. Residues 102–104 (GTT) and 126–129 (AANF) each bind NAD(+). The Proton donor/acceptor role is filled by H159. H160 contributes to the (S)-2,3,4,5-tetrahydrodipicolinate binding site. Residue K163 is the Proton donor of the active site. Position 169–170 (169–170 (GT)) interacts with (S)-2,3,4,5-tetrahydrodipicolinate.

It belongs to the DapB family. Homotetramer.

The protein resides in the cytoplasm. It carries out the reaction (S)-2,3,4,5-tetrahydrodipicolinate + NAD(+) + H2O = (2S,4S)-4-hydroxy-2,3,4,5-tetrahydrodipicolinate + NADH + H(+). It catalyses the reaction (S)-2,3,4,5-tetrahydrodipicolinate + NADP(+) + H2O = (2S,4S)-4-hydroxy-2,3,4,5-tetrahydrodipicolinate + NADPH + H(+). Its pathway is amino-acid biosynthesis; L-lysine biosynthesis via DAP pathway; (S)-tetrahydrodipicolinate from L-aspartate: step 4/4. Its function is as follows. Catalyzes the conversion of 4-hydroxy-tetrahydrodipicolinate (HTPA) to tetrahydrodipicolinate. The chain is 4-hydroxy-tetrahydrodipicolinate reductase from Escherichia coli (strain K12 / MC4100 / BW2952).